The following is a 448-amino-acid chain: Phosphoglucosamine mutase (448 aa).

Ser-100 functions as the Phosphoserine intermediate in the catalytic mechanism. 4 residues coordinate Mg(2+): Ser-100, Asp-240, Asp-242, and Asp-244. Phosphoserine is present on Ser-100.

It belongs to the phosphohexose mutase family. It depends on Mg(2+) as a cofactor. Post-translationally, activated by phosphorylation.

The enzyme catalyses alpha-D-glucosamine 1-phosphate = D-glucosamine 6-phosphate. Functionally, catalyzes the conversion of glucosamine-6-phosphate to glucosamine-1-phosphate. The sequence is that of Phosphoglucosamine mutase from Clostridium perfringens (strain ATCC 13124 / DSM 756 / JCM 1290 / NCIMB 6125 / NCTC 8237 / Type A).